A 223-amino-acid chain; its full sequence is Adenylate kinase 4, mitochondrial (223 aa).

15–20 (GSGKGT) is a binding site for a ribonucleoside 5'-triphosphate. Residues 35 to 64 (SSGHFLRENIKANTEVGEMAKQYIEKSLLV) form an NMP region. Positions 36 and 41 each coordinate AMP. Position 60 is an N6-succinyllysine (Lys60). AMP contacts are provided by residues 62–64 (LLV), 89–92 (GFPR), and Gln96. Residues 125–162 (RRWIHPPSGRVYNLDFNPPHVHGIDDVTGEPLVQQEDD) are LID. A ribonucleoside 5'-triphosphate contacts are provided by residues Arg126 and 135-136 (VY). Position 170 (Arg170) interacts with AMP. Lys175 carries the post-translational modification N6-acetyllysine. N6-acetyllysine; alternate occurs at positions 179 and 186. N6-succinyllysine; alternate is present on residues Lys179 and Lys186. Thr199 is a binding site for a ribonucleoside 5'-triphosphate.

The protein belongs to the adenylate kinase family. AK3 subfamily. In terms of assembly, monomer. Interacts with SLC25A5/ANT2.

The protein resides in the mitochondrion matrix. The catalysed reaction is a ribonucleoside 5'-phosphate + ATP = a ribonucleoside 5'-diphosphate + ADP. It catalyses the reaction AMP + ATP = 2 ADP. It carries out the reaction GTP + AMP = GDP + ADP. The enzyme catalyses CMP + ATP = CDP + ADP. The catalysed reaction is GTP + CMP = CDP + GDP. It catalyses the reaction dAMP + ATP = dADP + ADP. It carries out the reaction dCMP + ATP = dCDP + ADP. The enzyme catalyses a 2'-deoxyribonucleoside 5'-diphosphate + ATP = a 2'-deoxyribonucleoside 5'-triphosphate + ADP. The catalysed reaction is a ribonucleoside 5'-diphosphate + ATP = a ribonucleoside 5'-triphosphate + ADP. It catalyses the reaction GDP + ATP = GTP + ADP. It carries out the reaction CDP + GTP = CTP + GDP. The enzyme catalyses CDP + ATP = CTP + ADP. The catalysed reaction is UDP + ATP = UTP + ADP. It catalyses the reaction GTP + UDP = UTP + GDP. It carries out the reaction dADP + GTP = dATP + GDP. The enzyme catalyses dCDP + GTP = dCTP + GDP. The catalysed reaction is dCDP + ATP = dCTP + ADP. It catalyses the reaction dGDP + ATP = dGTP + ADP. It carries out the reaction dTDP + GTP = dTTP + GDP. The enzyme catalyses dTDP + ATP = dTTP + ADP. Broad-specificity mitochondrial nucleoside phosphate kinase involved in cellular nucleotide homeostasis by catalyzing nucleoside-phosphate interconversions. Similar to other adenylate kinases, preferentially catalyzes the phosphorylation of the nucleoside monophosphate AMP with ATP as phosphate donor to produce ADP. Phosphorylates only AMP when using GTP as phosphate donor. In vitro, can also catalyze the phosphorylation of CMP, dAMP and dCMP and use GTP as an alternate phosphate donor. Moreover, exhibits a diphosphate kinase activity, producing ATP, CTP, GTP, UTP, TTP, dATP, dCTP and dGTP from the corresponding diphosphate substrates with either ATP or GTP as phosphate donors. Plays a role in controlling cellular ATP levels by regulating phosphorylation and activation of the energy sensor protein kinase AMPK. Plays a protective role in the cellular response to oxidative stress. The chain is Adenylate kinase 4, mitochondrial from Pongo abelii (Sumatran orangutan).